The following is a 403-amino-acid chain: Chorismate synthase (403 aa).

The NADP(+) site is built by R40 and R46. Residues 140–142 (RSS), 261–262 (QA), G305, 320–324 (KPIST), and R346 each bind FMN.

Belongs to the chorismate synthase family. Homotetramer. FMNH2 is required as a cofactor.

The enzyme catalyses 5-O-(1-carboxyvinyl)-3-phosphoshikimate = chorismate + phosphate. The protein operates within metabolic intermediate biosynthesis; chorismate biosynthesis; chorismate from D-erythrose 4-phosphate and phosphoenolpyruvate: step 7/7. Its function is as follows. Catalyzes the anti-1,4-elimination of the C-3 phosphate and the C-6 proR hydrogen from 5-enolpyruvylshikimate-3-phosphate (EPSP) to yield chorismate, which is the branch point compound that serves as the starting substrate for the three terminal pathways of aromatic amino acid biosynthesis. This reaction introduces a second double bond into the aromatic ring system. The polypeptide is Chorismate synthase (Corynebacterium diphtheriae (strain ATCC 700971 / NCTC 13129 / Biotype gravis)).